Reading from the N-terminus, the 644-residue chain is MFQDNPLLAQLKQQLHSQTPRVEGVVKGTEKGFGFLEVDAQKSYFISPPFMKKVMHGDKISAVVRTEKEREIAEPEELIEPFLTRFIGRVQVKDERLAVVPDHPLIKEVIPTRPQHGVDQMFQTGDWAVAEMRRHPLKGDRQFYAEITALVTRADDHFAPWWVTLARHNLERAAPTMPEGVSLQEDGPAREDLTALDFITIDSASTEDMDDAIHLAPAPNGAWVMTVAIADPTAWVPAGSPLDNIARERAFTNYLPGFNIPMLPRALSDDLCSLRAHERRPALACRVTVRPNGTLADDARFFTAWIESKGKLAYDNVSDWLENLGSWQPETEAIADQIRLLHDVCLARSAWRQRHALVFKDRPDYRFVLNEKGNVDDIVVEPRRIANRMIEEAMITANVCAARVLRDGLGYGLYNVHHGFDPLLVDQAVAILHSHQIEVDPADLLTLEGFCALRRRLDAQPTSYLDSRIRRFQTFAEVSTVPGPHFGLGLDAYATWTSPIRKYGDMINHRLLKALIGVGDAERPNEEVTLRLAERRRQNRMAERDVGDWLYARFLQPKAGSDSRFAAEIIDISRGGMRVRLLNNGAVAFIPAPFIHSVRDELVCSQDTGTVQVKGEERYRQGDTLDVTLAEVRMENRSVIARPV.

The region spanning 190–516 (REDLTALDFI…INHRLLKALI (327 aa)) is the RNB domain. Positions 562–644 (DSRFAAEIID…ENRSVIARPV (83 aa)) constitute an S1 motif domain.

This sequence belongs to the RNR ribonuclease family. RNase II subfamily.

It localises to the cytoplasm. The catalysed reaction is Exonucleolytic cleavage in the 3'- to 5'-direction to yield nucleoside 5'-phosphates.. Its function is as follows. Involved in mRNA degradation. Hydrolyzes single-stranded polyribonucleotides processively in the 3' to 5' direction. The protein is Exoribonuclease 2 of Sodalis glossinidius (strain morsitans).